We begin with the raw amino-acid sequence, 500 residues long: Nucleolar and spindle-associated protein 1 (500 aa).

Disordered stretches follow at residues 48–204 (KNET…NFKK), 241–299 (TKKS…ASKS), 319–353 (VRFS…PESE), and 365–500 (ELLP…VPVK). Basic residues predominate over residues 82-92 (THRRGRGRKPI). The segment covering 113–127 (NMASSIDRTQQQNCT) has biased composition (polar residues). The span at 264-274 (SRLSLLSPLPR) shows a compositional bias: low complexity. Polar residues predominate over residues 276 to 298 (TGASPSRTPMSQRRSCRSSTASK). The segment covering 323-332 (EATKDNEHKR) has biased composition (basic and acidic residues). The span at 380-392 (ITLNTTTQPSPAT) shows a compositional bias: polar residues. Residues 442-451 (PWGESKENKP) show a composition bias toward basic and acidic residues. Residues 452–469 (DPNSNVSVLKNNYKQPHL) are compositionally biased toward polar residues.

The protein belongs to the NUSAP family. Interacts with DNA, microtubules, ipo7, kpna2 and kpnb1. Microtubule stabilization is inhibited by ipo7 and kpna2, while microtubule bundling is inhibited by kpnb1. Active GTP-bound ran causes dissociation of ipo7 and kpnb1.

The protein resides in the cytoplasm. Its subcellular location is the nucleus. It is found in the cytoskeleton. It localises to the spindle. Functionally, microtubule-associated protein with the capacity to bundle and stabilize microtubules. May associate with chromosomes and promote the organization of meiotic or mitotic spindle microtubules around them. This chain is Nucleolar and spindle-associated protein 1 (nusap1), found in Xenopus tropicalis (Western clawed frog).